Reading from the N-terminus, the 336-residue chain is GTPase Obg (336 aa).

In terms of domain architecture, Obg spans 1–159 (MKFLDQAKIY…RWVWLRLKLI (159 aa)). Positions 160 to 328 (ADIGLVGLPN…LLRLLQDRVT (169 aa)) constitute an OBG-type G domain. Residues 166–173 (GLPNAGKS), 191–195 (FTTLH), 213–216 (DIPG), 280–283 (NKCD), and 309–311 (SGA) contribute to the GTP site. Mg(2+) contacts are provided by serine 173 and threonine 193.

It belongs to the TRAFAC class OBG-HflX-like GTPase superfamily. OBG GTPase family. As to quaternary structure, monomer. Requires Mg(2+) as cofactor.

It is found in the cytoplasm. Functionally, an essential GTPase which binds GTP, GDP and possibly (p)ppGpp with moderate affinity, with high nucleotide exchange rates and a fairly low GTP hydrolysis rate. Plays a role in control of the cell cycle, stress response, ribosome biogenesis and in those bacteria that undergo differentiation, in morphogenesis control. This chain is GTPase Obg, found in Gluconobacter oxydans (strain 621H) (Gluconobacter suboxydans).